We begin with the raw amino-acid sequence, 250 residues long: Pyrroloquinoline-quinone synthase (250 aa).

The protein belongs to the PqqC family.

The catalysed reaction is 6-(2-amino-2-carboxyethyl)-7,8-dioxo-1,2,3,4,7,8-hexahydroquinoline-2,4-dicarboxylate + 3 O2 = pyrroloquinoline quinone + 2 H2O2 + 2 H2O + H(+). It participates in cofactor biosynthesis; pyrroloquinoline quinone biosynthesis. In terms of biological role, ring cyclization and eight-electron oxidation of 3a-(2-amino-2-carboxyethyl)-4,5-dioxo-4,5,6,7,8,9-hexahydroquinoline-7,9-dicarboxylic-acid to PQQ. This Xanthomonas euvesicatoria pv. vesicatoria (strain 85-10) (Xanthomonas campestris pv. vesicatoria) protein is Pyrroloquinoline-quinone synthase.